Consider the following 928-residue polypeptide: Isoleucine--tRNA ligase (928 aa).

The 'HIGH' region signature appears at 57-67; sequence PFANGNIHMGH. Residue Glu-554 coordinates L-isoleucyl-5'-AMP. Positions 595–599 match the 'KMSKS' region motif; it reads KMSKS. Position 598 (Lys-598) interacts with ATP. The Zn(2+) site is built by Cys-887, Cys-890, Cys-907, and Cys-910.

This sequence belongs to the class-I aminoacyl-tRNA synthetase family. IleS type 1 subfamily. Monomer. Zn(2+) is required as a cofactor.

The protein resides in the cytoplasm. It catalyses the reaction tRNA(Ile) + L-isoleucine + ATP = L-isoleucyl-tRNA(Ile) + AMP + diphosphate. Its function is as follows. Catalyzes the attachment of isoleucine to tRNA(Ile). As IleRS can inadvertently accommodate and process structurally similar amino acids such as valine, to avoid such errors it has two additional distinct tRNA(Ile)-dependent editing activities. One activity is designated as 'pretransfer' editing and involves the hydrolysis of activated Val-AMP. The other activity is designated 'posttransfer' editing and involves deacylation of mischarged Val-tRNA(Ile). In Lactobacillus johnsonii (strain CNCM I-12250 / La1 / NCC 533), this protein is Isoleucine--tRNA ligase.